A 287-amino-acid chain; its full sequence is Membrane protein insertase YidC 2 (287 aa).

The N-terminal stretch at 1-26 (MKKKKRFKQKLLIASLVIGLMAVLSG) is a signal peptide. Cys27 carries N-palmitoyl cysteine lipidation. The S-diacylglycerol cysteine moiety is linked to residue Cys27. 5 helical membrane passes run 65-85 (YAVG…PLMI), 135-155 (MMGC…YQAI), 178-198 (YILP…SMMG), 207-224 (AMIV…GITL), and 228-250 (LALY…NNPF).

The protein belongs to the OXA1/ALB3/YidC family. Type 2 subfamily.

The protein localises to the cell membrane. Its function is as follows. Required for the insertion and/or proper folding and/or complex formation of integral membrane proteins into the membrane. Involved in integration of membrane proteins that insert both dependently and independently of the Sec translocase complex, as well as at least some lipoproteins. The protein is Membrane protein insertase YidC 2 of Listeria monocytogenes serovar 1/2a (strain ATCC BAA-679 / EGD-e).